The chain runs to 245 residues: Orotidine 5'-phosphate decarboxylase (245 aa).

Residues D22, K44, 71 to 80, T131, R192, Q201, G221, and R222 contribute to the substrate site; that span reads DLKFHDIPNT. The Proton donor role is filled by K73.

Belongs to the OMP decarboxylase family. Type 1 subfamily. As to quaternary structure, homodimer.

It catalyses the reaction orotidine 5'-phosphate + H(+) = UMP + CO2. Its pathway is pyrimidine metabolism; UMP biosynthesis via de novo pathway; UMP from orotate: step 2/2. Catalyzes the decarboxylation of orotidine 5'-monophosphate (OMP) to uridine 5'-monophosphate (UMP). This chain is Orotidine 5'-phosphate decarboxylase, found in Salmonella typhi.